A 328-amino-acid chain; its full sequence is Renalase (328 aa).

FAD is bound by residues A13, 32 to 33 (DK), R40, and 56 to 57 (QY). Residues 57-61 (YFTAR) and 96-98 (SPD) each bind substrate. Residue I128 coordinates FAD. T185 contacts substrate. An FAD-binding site is contributed by D302. R308 is a binding site for substrate. An FAD-binding site is contributed by V309.

Belongs to the bacterial renalase family. FAD serves as cofactor.

The catalysed reaction is 1,2-dihydro-beta-NAD + O2 + H(+) = H2O2 + NAD(+). The enzyme catalyses 1,2-dihydro-beta-NADP + O2 + H(+) = H2O2 + NADP(+). It carries out the reaction 1,6-dihydro-beta-NADP + O2 + H(+) = H2O2 + NADP(+). It catalyses the reaction 1,6-dihydro-beta-NAD + O2 + H(+) = H2O2 + NAD(+). In terms of biological role, catalyzes the oxidation of the 1,2-dihydro- and 1,6-dihydro- isomeric forms of beta-NAD(P) back to beta-NAD(P)+. Has a preference for 1,2-dihydro-beta-NAD as substrate. May serve to protect primary metabolism dehydrogenases from inhibition by the 1,2-dihydro- and 1,6-dihydro-beta-NAD(P) isomers. This chain is Renalase, found in Pseudomonas syringae pv. tomato (strain ATCC BAA-871 / DC3000).